Consider the following 275-residue polypeptide: Formamidopyrimidine-DNA glycosylase (275 aa).

The active-site Schiff-base intermediate with DNA is the proline 2. The active-site Proton donor is the glutamate 3. Lysine 58 functions as the Proton donor; for beta-elimination activity in the catalytic mechanism. Residues histidine 91, arginine 109, and arginine 154 each contribute to the DNA site. Residues alanine 240 to lysine 274 form an FPG-type zinc finger. The active-site Proton donor; for delta-elimination activity is the arginine 264.

The protein belongs to the FPG family. In terms of assembly, monomer. The cofactor is Zn(2+).

The enzyme catalyses Hydrolysis of DNA containing ring-opened 7-methylguanine residues, releasing 2,6-diamino-4-hydroxy-5-(N-methyl)formamidopyrimidine.. It catalyses the reaction 2'-deoxyribonucleotide-(2'-deoxyribose 5'-phosphate)-2'-deoxyribonucleotide-DNA = a 3'-end 2'-deoxyribonucleotide-(2,3-dehydro-2,3-deoxyribose 5'-phosphate)-DNA + a 5'-end 5'-phospho-2'-deoxyribonucleoside-DNA + H(+). Involved in base excision repair of DNA damaged by oxidation or by mutagenic agents. Acts as a DNA glycosylase that recognizes and removes damaged bases. Has a preference for oxidized purines, such as 7,8-dihydro-8-oxoguanine (8-oxoG). Has AP (apurinic/apyrimidinic) lyase activity and introduces nicks in the DNA strand. Cleaves the DNA backbone by beta-delta elimination to generate a single-strand break at the site of the removed base with both 3'- and 5'-phosphates. The sequence is that of Formamidopyrimidine-DNA glycosylase from Bordetella petrii (strain ATCC BAA-461 / DSM 12804 / CCUG 43448).